Consider the following 575-residue polypeptide: Transcription factor COE2 (575 aa).

Residues R62–N65 form an interaction with DNA region. A C5-type zinc finger spans residues C150 to C169. 2 interaction with DNA regions span residues N196–N203 and N235–K238. The region spanning P253–T336 is the IPT/TIG domain. Positions S441 to T453 are enriched in polar residues. Residues S441 to M479 form a disordered region. Low complexity predominate over residues S454–M479.

The protein belongs to the COE family. In terms of assembly, forms either a homodimer or a heterodimer with a related family member. Interacts with SIX1.

It is found in the nucleus. Transcription factor that, in osteoblasts, activates the decoy receptor for RANKL, TNFRSF11B, which in turn regulates osteoclast differentiation. Acts in synergy with the Wnt-responsive LEF1/CTNNB1 pathway. Recognizes variations of the palindromic sequence 5'-ATTCCCNNGGGAATT-3'. This is Transcription factor COE2 (EBF2) from Bos taurus (Bovine).